The following is a 148-amino-acid chain: Small ribosomal subunit protein bS16 (148 aa).

Residues 106–148 (QAAARAAAGAEDRPATTPKKAKKSGSAEEAEAAPATDAPAAGQ) form a disordered region. A compositionally biased stretch (low complexity) spans 137–148 (AAPATDAPAAGQ).

The protein belongs to the bacterial ribosomal protein bS16 family.

This is Small ribosomal subunit protein bS16 from Frankia casuarinae (strain DSM 45818 / CECT 9043 / HFP020203 / CcI3).